A 382-amino-acid polypeptide reads, in one-letter code: Dual-specificity RNA methyltransferase RlmN (382 aa).

The Proton acceptor role is filled by Glu-94. The 237-residue stretch at 100-336 (EANRGTLCVS…NTITRKTRGD (237 aa)) folds into the Radical SAM core domain. Residues Cys-107 and Cys-342 are joined by a disulfide bond. The [4Fe-4S] cluster site is built by Cys-114, Cys-118, and Cys-121. S-adenosyl-L-methionine contacts are provided by residues 168–169 (GE), Ser-200, 222–224 (SLH), and Asn-299. Cys-342 acts as the S-methylcysteine intermediate in catalysis.

Belongs to the radical SAM superfamily. RlmN family. [4Fe-4S] cluster is required as a cofactor.

It is found in the cytoplasm. It catalyses the reaction adenosine(2503) in 23S rRNA + 2 reduced [2Fe-2S]-[ferredoxin] + 2 S-adenosyl-L-methionine = 2-methyladenosine(2503) in 23S rRNA + 5'-deoxyadenosine + L-methionine + 2 oxidized [2Fe-2S]-[ferredoxin] + S-adenosyl-L-homocysteine. The enzyme catalyses adenosine(37) in tRNA + 2 reduced [2Fe-2S]-[ferredoxin] + 2 S-adenosyl-L-methionine = 2-methyladenosine(37) in tRNA + 5'-deoxyadenosine + L-methionine + 2 oxidized [2Fe-2S]-[ferredoxin] + S-adenosyl-L-homocysteine. Specifically methylates position 2 of adenine 2503 in 23S rRNA and position 2 of adenine 37 in tRNAs. m2A2503 modification seems to play a crucial role in the proofreading step occurring at the peptidyl transferase center and thus would serve to optimize ribosomal fidelity. In Legionella pneumophila (strain Lens), this protein is Dual-specificity RNA methyltransferase RlmN.